The sequence spans 394 residues: Elongation factor Tu (394 aa).

Residues 10–205 (KPHVNIGTIG…VDNWIPLPPR (196 aa)) form the tr-type G domain. Positions 19–26 (GHVDHGKT) are G1. A GTP-binding site is contributed by 19 to 26 (GHVDHGKT). A Mg(2+)-binding site is contributed by T26. The G2 stretch occupies residues 60–64 (GITIN). Residues 81–84 (DCPG) form a G3 region. GTP contacts are provided by residues 81 to 85 (DCPGH) and 136 to 139 (NKCD). The tract at residues 136 to 139 (NKCD) is G4. A G5 region spans residues 174-176 (SAL).

This sequence belongs to the TRAFAC class translation factor GTPase superfamily. Classic translation factor GTPase family. EF-Tu/EF-1A subfamily. Monomer.

The protein resides in the cytoplasm. It catalyses the reaction GTP + H2O = GDP + phosphate + H(+). Its function is as follows. GTP hydrolase that promotes the GTP-dependent binding of aminoacyl-tRNA to the A-site of ribosomes during protein biosynthesis. The protein is Elongation factor Tu of Bacteroides thetaiotaomicron (strain ATCC 29148 / DSM 2079 / JCM 5827 / CCUG 10774 / NCTC 10582 / VPI-5482 / E50).